Consider the following 102-residue polypeptide: Small ribosomal subunit protein uS10 (102 aa).

This sequence belongs to the universal ribosomal protein uS10 family. As to quaternary structure, part of the 30S ribosomal subunit.

Involved in the binding of tRNA to the ribosomes. The polypeptide is Small ribosomal subunit protein uS10 (Streptococcus thermophilus (strain ATCC BAA-491 / LMD-9)).